Consider the following 216-residue polypeptide: 3-isopropylmalate dehydratase small subunit 1 (216 aa).

This sequence belongs to the LeuD family. LeuD type 1 subfamily. As to quaternary structure, heterodimer of LeuC and LeuD.

It catalyses the reaction (2R,3S)-3-isopropylmalate = (2S)-2-isopropylmalate. Its pathway is amino-acid biosynthesis; L-leucine biosynthesis; L-leucine from 3-methyl-2-oxobutanoate: step 2/4. In terms of biological role, catalyzes the isomerization between 2-isopropylmalate and 3-isopropylmalate, via the formation of 2-isopropylmaleate. The polypeptide is 3-isopropylmalate dehydratase small subunit 1 (Bordetella bronchiseptica (strain ATCC BAA-588 / NCTC 13252 / RB50) (Alcaligenes bronchisepticus)).